The chain runs to 295 residues: MNILEKKAQLSYWQRIKIAFQYVMPQLYLTRLAGWFAKQQWGAVTHFVIKLFAKKYHVDMSEAAKPNFSDYASFNEFFIRPLADNARPINQNPTALCLPADGRISQLGHIEQDLLLQAKGHYFSLNDLLAGDEALAHHFKDGEFATTYLSPRDYHRVHMPCDATLCKMIYVPGDLFSVNPFLAEHVPNLFARNERVICVFDTEFGKMVQILVGATITASMSTVWAGVINPPRPEKITTWTYEGASAVKLTKGQEMGAFQLGSTVINLFEKDRVQLASHLQVDSPVRMGEILAHQK.

Residues aspartate 101, histidine 158, and serine 262 each act as charge relay system; for autoendoproteolytic cleavage activity in the active site. The active-site Schiff-base intermediate with substrate; via pyruvic acid; for decarboxylase activity is serine 262. Pyruvic acid (Ser); by autocatalysis is present on serine 262.

This sequence belongs to the phosphatidylserine decarboxylase family. PSD-B subfamily. Prokaryotic type I sub-subfamily. Heterodimer of a large membrane-associated beta subunit and a small pyruvoyl-containing alpha subunit. The cofactor is pyruvate. Post-translationally, is synthesized initially as an inactive proenzyme. Formation of the active enzyme involves a self-maturation process in which the active site pyruvoyl group is generated from an internal serine residue via an autocatalytic post-translational modification. Two non-identical subunits are generated from the proenzyme in this reaction, and the pyruvate is formed at the N-terminus of the alpha chain, which is derived from the carboxyl end of the proenzyme. The autoendoproteolytic cleavage occurs by a canonical serine protease mechanism, in which the side chain hydroxyl group of the serine supplies its oxygen atom to form the C-terminus of the beta chain, while the remainder of the serine residue undergoes an oxidative deamination to produce ammonia and the pyruvoyl prosthetic group on the alpha chain. During this reaction, the Ser that is part of the protease active site of the proenzyme becomes the pyruvoyl prosthetic group, which constitutes an essential element of the active site of the mature decarboxylase.

Its subcellular location is the cell membrane. The enzyme catalyses a 1,2-diacyl-sn-glycero-3-phospho-L-serine + H(+) = a 1,2-diacyl-sn-glycero-3-phosphoethanolamine + CO2. Its pathway is phospholipid metabolism; phosphatidylethanolamine biosynthesis; phosphatidylethanolamine from CDP-diacylglycerol: step 2/2. Its function is as follows. Catalyzes the formation of phosphatidylethanolamine (PtdEtn) from phosphatidylserine (PtdSer). The polypeptide is Phosphatidylserine decarboxylase proenzyme (Pasteurella multocida (strain Pm70)).